Here is a 605-residue protein sequence, read N- to C-terminus: Elongation factor 4 (605 aa).

Residues 9-192 form the tr-type G domain; it reads CRIRNFCIIA…SIVHRIPPPA (184 aa). GTP is bound by residues 21–26 and 139–142; these read DHGKST and NKID.

It belongs to the TRAFAC class translation factor GTPase superfamily. Classic translation factor GTPase family. LepA subfamily.

It localises to the cell inner membrane. It catalyses the reaction GTP + H2O = GDP + phosphate + H(+). Required for accurate and efficient protein synthesis under certain stress conditions. May act as a fidelity factor of the translation reaction, by catalyzing a one-codon backward translocation of tRNAs on improperly translocated ribosomes. Back-translocation proceeds from a post-translocation (POST) complex to a pre-translocation (PRE) complex, thus giving elongation factor G a second chance to translocate the tRNAs correctly. Binds to ribosomes in a GTP-dependent manner. This chain is Elongation factor 4, found in Chlorobium chlorochromatii (strain CaD3).